Here is a 57-residue protein sequence, read N- to C-terminus: Small ribosomal subunit protein bS21 (57 aa).

This sequence belongs to the bacterial ribosomal protein bS21 family.

The sequence is that of Small ribosomal subunit protein bS21 from Phytoplasma australiense.